Here is a 334-residue protein sequence, read N- to C-terminus: Biotin synthase (334 aa).

The region spanning 55–285 (GSSGSIHACS…VHPRKIIKIA (231 aa)) is the Radical SAM core domain. [4Fe-4S] cluster-binding residues include Cys73, Cys77, and Cys80. Cys152, Cys213, and Lys283 together coordinate [2Fe-2S] cluster.

Belongs to the radical SAM superfamily. Biotin synthase family. In terms of assembly, homodimer. It depends on [4Fe-4S] cluster as a cofactor. Requires [2Fe-2S] cluster as cofactor.

It catalyses the reaction (4R,5S)-dethiobiotin + (sulfur carrier)-SH + 2 reduced [2Fe-2S]-[ferredoxin] + 2 S-adenosyl-L-methionine = (sulfur carrier)-H + biotin + 2 5'-deoxyadenosine + 2 L-methionine + 2 oxidized [2Fe-2S]-[ferredoxin]. The protein operates within cofactor biosynthesis; biotin biosynthesis; biotin from 7,8-diaminononanoate: step 2/2. Functionally, catalyzes the conversion of dethiobiotin (DTB) to biotin by the insertion of a sulfur atom into dethiobiotin via a radical-based mechanism. This Chlorobium phaeobacteroides (strain DSM 266 / SMG 266 / 2430) protein is Biotin synthase.